A 137-amino-acid chain; its full sequence is Large ribosomal subunit protein uL16 (137 aa).

This sequence belongs to the universal ribosomal protein uL16 family. Part of the 50S ribosomal subunit.

Functionally, binds 23S rRNA and is also seen to make contacts with the A and possibly P site tRNAs. The chain is Large ribosomal subunit protein uL16 from Azorhizobium caulinodans (strain ATCC 43989 / DSM 5975 / JCM 20966 / LMG 6465 / NBRC 14845 / NCIMB 13405 / ORS 571).